A 162-amino-acid chain; its full sequence is Endoribonuclease YbeY (162 aa).

Residues histidine 126, histidine 130, and histidine 136 each contribute to the Zn(2+) site.

Belongs to the endoribonuclease YbeY family. Zn(2+) serves as cofactor.

Its subcellular location is the cytoplasm. Functionally, single strand-specific metallo-endoribonuclease involved in late-stage 70S ribosome quality control and in maturation of the 3' terminus of the 16S rRNA. This is Endoribonuclease YbeY from Fusobacterium nucleatum subsp. nucleatum (strain ATCC 25586 / DSM 15643 / BCRC 10681 / CIP 101130 / JCM 8532 / KCTC 2640 / LMG 13131 / VPI 4355).